A 198-amino-acid polypeptide reads, in one-letter code: Probable molybdenum cofactor guanylyltransferase (198 aa).

GTP is bound by residues 11 to 13, lysine 23, aspartate 71, and aspartate 102; that span reads LAG. A Mg(2+)-binding site is contributed by aspartate 102.

Belongs to the MobA family. Mg(2+) serves as cofactor.

The protein localises to the cytoplasm. It catalyses the reaction Mo-molybdopterin + GTP + H(+) = Mo-molybdopterin guanine dinucleotide + diphosphate. Functionally, transfers a GMP moiety from GTP to Mo-molybdopterin (Mo-MPT) cofactor (Moco or molybdenum cofactor) to form Mo-molybdopterin guanine dinucleotide (Mo-MGD) cofactor. In Halalkalibacterium halodurans (strain ATCC BAA-125 / DSM 18197 / FERM 7344 / JCM 9153 / C-125) (Bacillus halodurans), this protein is Probable molybdenum cofactor guanylyltransferase.